A 275-amino-acid polypeptide reads, in one-letter code: HUWE1-associated protein modifying stress responses (275 aa).

Residues 32–44 (AEQDEQLSPELQE) show a composition bias toward acidic residues. 4 disordered regions span residues 32 to 51 (AEQD…AAAQ), 155 to 181 (RNSR…SSVE), 204 to 228 (SVRS…RRNG), and 250 to 275 (GTRK…NRML). At Ser-167 the chain carries Phosphoserine. Residues 172 to 181 (TSTETSSSVE) are compositionally biased toward low complexity. Polar residues predominate over residues 204–221 (SVRSSTPGSPTHVSSGPN). Residue Ser-212 is modified to Phosphoserine.

Belongs to the HAPSTR1 family. In terms of assembly, homooligomer. Heterooligomer with HAPSTR2; the interaction is direct and stabilizes HAPSTR1. Interacts with HUWE1. In terms of processing, ubiquitinated by HUWE1. Promotes HAPSTR1 degradation through polyubiquitination.

The protein localises to the nucleus. Its subcellular location is the cytoplasm. Functionally, acts as a central player within a network of stress response pathways promoting cellular adaptability. The E3 ligase HUWE1 assists HAPSTR1 in controlling stress signaling and in turn, HUWE1 feeds back to promote the degradation of HAPSTR1. HAPSTR1 represents a central coordination mechanism for stress response programs. Functions as a negative regulator of TP53/P53 in the cellular response to telomere erosion and probably also DNA damage. May attenuate p53/TP53 activation through the E3 ubiquitin ligase HUWE1. This Mus musculus (Mouse) protein is HUWE1-associated protein modifying stress responses.